Here is a 288-residue protein sequence, read N- to C-terminus: Peptidyl-tRNA hydrolase, chloroplastic (288 aa).

Residues 1 to 55 (MKAVAFPAKIANLSFPSNCCSLFFRSPATFLSPALPCRKLTKGIRGLEGLMSQCL) constitute a chloroplast transit peptide. Tyrosine 107 provides a ligand contact to tRNA. Histidine 112 functions as the Proton acceptor in the catalytic mechanism. Residues phenylalanine 157, asparagine 159, and asparagine 205 each coordinate tRNA.

The protein belongs to the PTH family. In terms of assembly, monomer.

It is found in the plastid. The protein resides in the chloroplast stroma. The enzyme catalyses an N-acyl-L-alpha-aminoacyl-tRNA + H2O = an N-acyl-L-amino acid + a tRNA + H(+). Functionally, the natural substrate for this enzyme may be peptidyl-tRNAs which drop off the ribosome during protein synthesis. The sequence is that of Peptidyl-tRNA hydrolase, chloroplastic from Arabidopsis thaliana (Mouse-ear cress).